The chain runs to 652 residues: Transmembrane 9 superfamily member 12 (652 aa).

Positions 1-20 (MFGVYRVFVLLVFVSQLCNG) are cleaved as a signal peptide. Topologically, residues 21–286 (FYLPGSYMHT…LKMEGARVHW (266 aa)) are lumenal. Residues 287 to 307 (FSILNSLMVIFFLAGIVFVIF) traverse the membrane as a helical segment. Over 308–362 (LRTVRRDLTKYEELDKEAQAQMNEELSGWKLVVGDVFREPEMSKLLCIMVGDGVR) the chain is Cytoplasmic. The chain crosses the membrane as a helical span at residues 363-383 (ITGMAVVTIVFAALGFMSPAS). At 384–386 (RGM) the chain is on the lumenal side. A helical membrane pass occupies residues 387-407 (LLTGMIILYLFLGIVAGYAGV). Residues 408 to 426 (RLWRTVKGTSEGWRSLSWS) are Cytoplasmic-facing. A helical transmembrane segment spans residues 427–447 (IACFFPGIAFVILTVLNFLLW). Topologically, residues 448–460 (SSNSTGAIPISLY) are lumenal. Residues 461–481 (FELLALWFCISVPLTLFGGFL) traverse the membrane as a helical segment. Over 482–510 (GTRAEAIQFPVRTNQIPREIPERKYPSWL) the chain is Cytoplasmic. Residues 511-531 (LVLGAGTLPFGTLFIELFFIF) form a helical membrane-spanning segment. The Lumenal segment spans residues 532–541 (SSIWLGRFYY). Residues 542–562 (VFGFLLIVLLLLVVVCAEVSV) form a helical membrane-spanning segment. Over 563–580 (VLTYMHLCVEDWRWWWKA) the chain is Cytoplasmic. Residues 581–601 (FYASGSVALYVFAYSINYLVF) form a helical membrane-spanning segment. The Lumenal segment spans residues 602–613 (DLQSLSGPVSAM). The helical transmembrane segment at 614-634 (LYIGYSLLMAIAIMLATGTIG) threads the bilayer. The Cytoplasmic portion of the chain corresponds to 635-652 (FLTSFYFVHYLFSSVKID). An Endoplasmic reticulum export signal motif is present at residues 641 to 646 (FVHYLF). A Golgi retention signal motif is present at residues 650-652 (KID).

Belongs to the nonaspanin (TM9SF) (TC 9.A.2) family.

Its subcellular location is the endosome membrane. It is found in the golgi apparatus membrane. In Arabidopsis thaliana (Mouse-ear cress), this protein is Transmembrane 9 superfamily member 12.